Reading from the N-terminus, the 224-residue chain is Jacalin-related lectin 24 (224 aa).

The region spanning 8–160 (MFKVGPIGSK…LTSIGIYVYP (153 aa)) is the Jacalin-type lectin domain.

The protein belongs to the jacalin lectin family.

This is Jacalin-related lectin 24 (JAL24) from Arabidopsis thaliana (Mouse-ear cress).